A 314-amino-acid polypeptide reads, in one-letter code: Homeobox protein SIX3 (314 aa).

A DNA-binding region (homeobox) is located at residues 188-247 (GEQKTHCFKERTRSLLREWYLQDPYPNPSKKRELAQATGLTPTQVGNWFKNRRQRDRAAA). Disordered regions lie at residues 214–233 (NPSK…TQVG) and 240–314 (RQRD…ECDV). Over residues 271–293 (PTHSSAESPSTAASPTTSVSSLT) the composition is skewed to low complexity. Positions 298-314 (TGTSILSVTSSDSECDV) are enriched in polar residues.

The protein belongs to the SIX/Sine oculis homeobox family.

The protein localises to the nucleus. Its function is as follows. Transcriptional regulator which can act as both a transcriptional repressor and activator by binding a ATTA homeodomain core recognition sequence on these target genes. During forebrain development represses WNT1 expression allowing zona limitans intrathalamica formation and thereby ensuring proper anterio-posterior patterning of the diencephalon and formation of the rostral diencephalon. Acts as a direct upstream activator of SHH expression in the rostral diencephalon ventral midline and that in turn SHH maintains its expression. In addition, Six3 activity is required for the formation of the telencephalon. During postnatal stages of brain development is necessary for ependymal cell maturation by promoting the maturation of radial glia into ependymal cells through regulation of neuroblast proliferation and migration. Acts on the proliferation and differentiation of neural progenitor cells through activating transcription of CCND1 and CCND2. During early lens formation plays a role in lens induction and specification by activating directly PAX6 in the presumptive lens ectoderm. In turn PAX6 activates SIX3 resulting in activation of PDGFRA and CCND1 promoting cell proliferation. Also is required for the neuroretina development by directly suppressing WNT8B expression in the anterior neural plate territory. Its action during retina development and lens morphogenesis is AES and TLE4-dependent manner. Furthermore, during eye development regulates several genes expression. Before and during early lens development represses the CRYGF promoter by binding a SIX repressor element. Directly activates RHO transcription, or cooperates with CRX or NRL. Six3 also functions in the formation of the proximodistal axis of the optic cup, and promotes the formation of optic vesicles-like structures. During pituitary development, acts in parallel or alternatively with HESX1 to control cell proliferation through Wnt/beta-catenin pathway. Plays a role in eye development by suppressing WNT1 expression and in dorsal-ventral patterning by repressing BMP signaling pathway. The polypeptide is Homeobox protein SIX3 (SIX3) (Gallus gallus (Chicken)).